The chain runs to 371 residues: Chaperone protein DnaJ (371 aa).

The J domain maps to 4-68 (DYYKILGVSK…QKRAAYDRFG (65 aa)). The CR-type zinc-finger motif lies at 134–212 (GIEKNISFSS…CHGMGRCHKQ (79 aa)). Residues Cys-147, Cys-150, Cys-164, Cys-167, Cys-186, Cys-189, Cys-200, and Cys-203 each coordinate Zn(2+). 4 CXXCXGXG motif repeats span residues 147–154 (CDTCHGSG), 164–171 (CDACGGVG), 186–193 (CHKCKGNG), and 200–207 (CKKCHGMG).

It belongs to the DnaJ family. As to quaternary structure, homodimer. The cofactor is Zn(2+).

The protein localises to the cytoplasm. Its function is as follows. Participates actively in the response to hyperosmotic and heat shock by preventing the aggregation of stress-denatured proteins and by disaggregating proteins, also in an autonomous, DnaK-independent fashion. Unfolded proteins bind initially to DnaJ; upon interaction with the DnaJ-bound protein, DnaK hydrolyzes its bound ATP, resulting in the formation of a stable complex. GrpE releases ADP from DnaK; ATP binding to DnaK triggers the release of the substrate protein, thus completing the reaction cycle. Several rounds of ATP-dependent interactions between DnaJ, DnaK and GrpE are required for fully efficient folding. Also involved, together with DnaK and GrpE, in the DNA replication of plasmids through activation of initiation proteins. In Rickettsia akari (strain Hartford), this protein is Chaperone protein DnaJ.